The primary structure comprises 1889 residues: Treslin (1889 aa).

Residues S295, S599, S820, S861, S919, S934, S1002, S1027, and S1078 each carry the phosphoserine modification. Residues 812–832 (DSMSQESMSPPPSSSTHRSVS) show a composition bias toward low complexity. A disordered region spans residues 812-836 (DSMSQESMSPPPSSSTHRSVSAITE). The interval 979 to 1063 (RLLHRQIKGR…RENFPVQSIQ (85 aa)) is disordered. Over residues 1020–1050 (LSFSRTNSGSFYSVSQPKSRSVQRIHSSQQE) the composition is skewed to polar residues. Disordered regions lie at residues 1098 to 1421 (EIST…SQFS), 1471 to 1508 (LPGE…SSSE), 1520 to 1543 (GKQR…SPQT), 1630 to 1714 (SCTP…SLEQ), 1730 to 1751 (VCQL…ETSW), and 1841 to 1875 (QGRT…TLSR). Over residues 1127 to 1179 (TAQTLLYTPERLQNSPTEMTSAEGTISEATIKTPSSHGYNSPFASKVTSQKTV) the composition is skewed to polar residues. A Phosphothreonine modification is found at T1134. S1141 is subject to Phosphoserine. Positions 1187–1197 (SPPLTKLPSTP) are enriched in low complexity. Residues 1203–1219 (QPPQCSSDCTWPHSVNS) show a composition bias toward polar residues. The span at 1339-1351 (TSPSVTSSVSCPV) shows a compositional bias: low complexity. The span at 1373–1382 (KLRRSCRKKS) shows a compositional bias: basic residues. S1406 carries the phosphoserine modification. The span at 1496 to 1508 (LVPAPSSVSSSSE) shows a compositional bias: low complexity. Composition is skewed to polar residues over residues 1525-1543 (DAAQ…SPQT) and 1652-1662 (WTPSPKQSGKT). The segment covering 1705-1714 (PEGKERSLEQ) has biased composition (basic and acidic residues).

The protein belongs to the treslin family. In terms of assembly, interacts with TOPBP1 (via BRCT domains); interaction takes place in a CDK2-dependent manner. Component of the replisome complex composed of at least DONSON, MCM2, MCM7, PCNA and TICRR.

It localises to the nucleus. Functionally, regulator of DNA replication and S/M and G2/M checkpoints. Regulates the triggering of DNA replication initiation via its interaction with TOPBP1 by participating in CDK2-mediated loading of CDC45L onto replication origins. Required for the transition from pre-replication complex (pre-RC) to pre-initiation complex (pre-IC). Required to prevent mitotic entry after treatment with ionizing radiation. This Mus musculus (Mouse) protein is Treslin (Ticrr).